The sequence spans 484 residues: Probable UDP-N-acetylglucosamine pyrophosphorylase (484 aa).

Residues 107 to 110 carry the Substrate binding motif; the sequence is LAGG. UTP contacts are provided by residues 107–110, K121, Q200, and G226; that span reads LAGG. N227 provides a ligand contact to substrate. A UTP-binding site is contributed by D255. The short motif at 304-305 is the Substrate binding element; sequence EY. K377 provides a ligand contact to UTP. K407 is a binding site for substrate.

This sequence belongs to the UDPGP type 1 family.

The protein resides in the cytoplasm. The enzyme catalyses N-acetyl-alpha-D-glucosamine 1-phosphate + UTP + H(+) = UDP-N-acetyl-alpha-D-glucosamine + diphosphate. Its pathway is nucleotide-sugar biosynthesis; UDP-N-acetyl-alpha-D-glucosamine biosynthesis; UDP-N-acetyl-alpha-D-glucosamine from N-acetyl-alpha-D-glucosamine 1-phosphate: step 1/1. The protein is Probable UDP-N-acetylglucosamine pyrophosphorylase of Caenorhabditis elegans.